Here is a 454-residue protein sequence, read N- to C-terminus: Tetrahydroanabasine acetyltransferase (454 aa).

Catalysis depends on proton acceptor residues His-164 and Asp-389.

This sequence belongs to the plant acyltransferase family. Monomer.

It catalyses the reaction tetrahydroanabasine + acetyl-CoA = ammodendrine + CoA. Its pathway is alkaloid biosynthesis. Tetrahydroanabasine acetyltransferase involved in the accumulation of quinolizidine type antinutritional alkaloids (QAs) natural products. QAs impart a bitter taste to plants, acting as repellents and toxicants for herbivores and predators, and possess a variety of pharmacological effects, including sedative, anticonvulsant, anti-inflammatory, antiviral, antitumor, antipyretic, anti-hepatitis B, antifibrotic, antiallergic, antidiarrheal, analgesic and antimicrobial activities. Mediates the conversion of tetrahydroanabasine into ammodendrine. This chain is Tetrahydroanabasine acetyltransferase, found in Lupinus albus (White lupine).